The chain runs to 130 residues: Small ribosomal subunit protein uS11c (130 aa).

This sequence belongs to the universal ribosomal protein uS11 family. As to quaternary structure, part of the 30S ribosomal subunit.

The protein localises to the plastid. Its subcellular location is the chloroplast. This Oedogonium cardiacum (Filamentous green alga) protein is Small ribosomal subunit protein uS11c.